The primary structure comprises 260 residues: uncharacterized protein (260 aa).

In terms of domain architecture, HTH iclR-type spans 7–67; the sequence is VPALTRAIDI…DHQENFCLWT (61 aa). Positions 28 to 47 form a DNA-binding region, H-T-H motif; the sequence is AATIIDTLGIPKSTAYLLLN. Positions 82 to 251 constitute an IclR-ED domain; sequence LRELARPRLT…ARDISRLLGW (170 aa).

This is an uncharacterized protein from Escherichia coli (strain K12).